Here is a 157-residue protein sequence, read N- to C-terminus: Protein Smg homolog (157 aa).

It belongs to the Smg family.

The sequence is that of Protein Smg homolog from Aeromonas salmonicida (strain A449).